The sequence spans 102 residues: 10 kDa heat shock protein, mitochondrial (102 aa).

A2 is subject to N-acetylalanine. K8 carries the N6-acetyllysine modification. K28 carries the N6-succinyllysine modification. Residue K40 is modified to N6-acetyllysine; alternate. An N6-malonyllysine; alternate mark is found at K40, K54, and K56. N6-succinyllysine; alternate occurs at positions 40, 54, 56, 66, and 70. N6-acetyllysine; alternate is present on residues K56, K66, and K70. T79 carries the phosphothreonine modification. Residues K80 and K86 each carry the N6-acetyllysine; alternate modification. 2 positions are modified to N6-succinyllysine; alternate: K80 and K86. K99 carries the N6-acetyllysine modification.

Belongs to the GroES chaperonin family. In terms of assembly, homoheptamer arranged in a ring structure. 2 heptameric Hsp10 rings interact with a Hsp60 tetradecamer in the structure of a back-to-back double heptameric ring to form the symmetrical football complex.

The protein localises to the mitochondrion matrix. Its function is as follows. Co-chaperonin implicated in mitochondrial protein import and macromolecular assembly. Together with Hsp60, facilitates the correct folding of imported proteins. May also prevent misfolding and promote the refolding and proper assembly of unfolded polypeptides generated under stress conditions in the mitochondrial matrix. The functional units of these chaperonins consist of heptameric rings of the large subunit Hsp60, which function as a back-to-back double ring. In a cyclic reaction, Hsp60 ring complexes bind one unfolded substrate protein per ring, followed by the binding of ATP and association with 2 heptameric rings of the co-chaperonin Hsp10. This leads to sequestration of the substrate protein in the inner cavity of Hsp60 where, for a certain period of time, it can fold undisturbed by other cell components. Synchronous hydrolysis of ATP in all Hsp60 subunits results in the dissociation of the chaperonin rings and the release of ADP and the folded substrate protein. This Rattus norvegicus (Rat) protein is 10 kDa heat shock protein, mitochondrial (Hspe1).